Here is a 175-residue protein sequence, read N- to C-terminus: MSEQKIEVVGKLGSTYGIRGWLRLYSSTEYPESIFDYQPWFLKIKGQWQQVELESWRYHNNDLIVKLKGTEDRETAQLLTNAEIGVDLAVFPELEEGDYYWHDLIGCQVVNLEGYAMGTVTEMMETGSNDVLVVKAGSKDAFGKQERLIPFLYEQVVKRVDLATKTITVDWDAGF.

The PRC barrel domain occupies 95 to 175 (EEGDYYWHDL…TITVDWDAGF (81 aa)).

The protein belongs to the RimM family. Binds ribosomal protein uS19.

Its subcellular location is the cytoplasm. Functionally, an accessory protein needed during the final step in the assembly of 30S ribosomal subunit, possibly for assembly of the head region. Essential for efficient processing of 16S rRNA. May be needed both before and after RbfA during the maturation of 16S rRNA. It has affinity for free ribosomal 30S subunits but not for 70S ribosomes. This chain is Ribosome maturation factor RimM, found in Glaesserella parasuis serovar 5 (strain SH0165) (Haemophilus parasuis).